The following is a 203-amino-acid chain: Nucleoside triphosphate pyrophosphatase (203 aa).

The active-site Proton acceptor is the D78.

The protein belongs to the Maf family. Requires a divalent metal cation as cofactor.

It is found in the cytoplasm. It carries out the reaction a ribonucleoside 5'-triphosphate + H2O = a ribonucleoside 5'-phosphate + diphosphate + H(+). The catalysed reaction is a 2'-deoxyribonucleoside 5'-triphosphate + H2O = a 2'-deoxyribonucleoside 5'-phosphate + diphosphate + H(+). Its function is as follows. Nucleoside triphosphate pyrophosphatase. May have a dual role in cell division arrest and in preventing the incorporation of modified nucleotides into cellular nucleic acids. The polypeptide is Nucleoside triphosphate pyrophosphatase (Prochlorococcus marinus (strain AS9601)).